The sequence spans 156 residues: Small ribosomal subunit protein uS7 (156 aa).

Belongs to the universal ribosomal protein uS7 family. In terms of assembly, part of the 30S ribosomal subunit. Contacts proteins S9 and S11.

In terms of biological role, one of the primary rRNA binding proteins, it binds directly to 16S rRNA where it nucleates assembly of the head domain of the 30S subunit. Is located at the subunit interface close to the decoding center, probably blocks exit of the E-site tRNA. This chain is Small ribosomal subunit protein uS7, found in Chromobacterium violaceum (strain ATCC 12472 / DSM 30191 / JCM 1249 / CCUG 213 / NBRC 12614 / NCIMB 9131 / NCTC 9757 / MK).